The primary structure comprises 103 residues: Large ribosomal subunit protein bL21 (103 aa).

The span at 83–92 (YRRKKGHRQP) shows a compositional bias: basic residues. The interval 83–103 (YRRKKGHRQPFSRVTVEKIEA) is disordered.

This sequence belongs to the bacterial ribosomal protein bL21 family. In terms of assembly, part of the 50S ribosomal subunit. Contacts protein L20.

In terms of biological role, this protein binds to 23S rRNA in the presence of protein L20. This Pelotomaculum thermopropionicum (strain DSM 13744 / JCM 10971 / SI) protein is Large ribosomal subunit protein bL21.